Reading from the N-terminus, the 381-residue chain is EPS I polysaccharide export outer membrane protein EpsA (381 aa).

An N-terminal signal peptide occupies residues 1–23; that stretch reads MFVSIPNIRKAVVSLSVVPLLAA. Cys24 is lipidated: N-palmitoyl cysteine. The S-diacylglycerol cysteine moiety is linked to residue Cys24.

This sequence belongs to the BexD/CtrA/VexA family.

The protein resides in the cell outer membrane. Functionally, probably involved in polymerization and/or export of exopolysaccharide EPS I which functions as a virulence factor. The sequence is that of EPS I polysaccharide export outer membrane protein EpsA (epsA) from Ralstonia nicotianae (strain ATCC BAA-1114 / GMI1000) (Ralstonia solanacearum).